The sequence spans 463 residues: Cysteine--tRNA ligase (463 aa).

C30 serves as a coordination point for Zn(2+). The 'HIGH' region signature appears at 32 to 42 (MTVYDYCHVGH). Zn(2+)-binding residues include C214, H239, and E243. A 'KMSKS' region motif is present at residues 271–275 (KMSKS). K274 contacts ATP.

The protein belongs to the class-I aminoacyl-tRNA synthetase family. As to quaternary structure, monomer. Requires Zn(2+) as cofactor.

The protein resides in the cytoplasm. It carries out the reaction tRNA(Cys) + L-cysteine + ATP = L-cysteinyl-tRNA(Cys) + AMP + diphosphate. This Ralstonia pickettii (strain 12J) protein is Cysteine--tRNA ligase.